Reading from the N-terminus, the 429-residue chain is Ribosomal RNA small subunit methyltransferase B (429 aa).

S-adenosyl-L-methionine contacts are provided by residues 254-260 (CAAPGGK), Asp277, Asp303, and Asp322. Cys375 functions as the Nucleophile in the catalytic mechanism.

The protein belongs to the class I-like SAM-binding methyltransferase superfamily. RsmB/NOP family.

It is found in the cytoplasm. The enzyme catalyses cytidine(967) in 16S rRNA + S-adenosyl-L-methionine = 5-methylcytidine(967) in 16S rRNA + S-adenosyl-L-homocysteine + H(+). In terms of biological role, specifically methylates the cytosine at position 967 (m5C967) of 16S rRNA. The protein is Ribosomal RNA small subunit methyltransferase B of Escherichia coli O6:H1 (strain CFT073 / ATCC 700928 / UPEC).